The sequence spans 258 residues: Aspartate/glutamate leucyltransferase (258 aa).

It belongs to the R-transferase family. Bpt subfamily.

Its subcellular location is the cytoplasm. It carries out the reaction N-terminal L-glutamyl-[protein] + L-leucyl-tRNA(Leu) = N-terminal L-leucyl-L-glutamyl-[protein] + tRNA(Leu) + H(+). The catalysed reaction is N-terminal L-aspartyl-[protein] + L-leucyl-tRNA(Leu) = N-terminal L-leucyl-L-aspartyl-[protein] + tRNA(Leu) + H(+). Its function is as follows. Functions in the N-end rule pathway of protein degradation where it conjugates Leu from its aminoacyl-tRNA to the N-termini of proteins containing an N-terminal aspartate or glutamate. The protein is Aspartate/glutamate leucyltransferase of Bradyrhizobium sp. (strain BTAi1 / ATCC BAA-1182).